Here is a 329-residue protein sequence, read N- to C-terminus: Beta-tectorin (329 aa).

An N-terminal signal peptide occupies residues 1–17; that stretch reads MVTKAFVLLAIFAEASA. Residues 19 to 283 form the ZP domain; that stretch reads SCAPNKADVI…LSCPVTCDKR (265 aa). 4 N-linked (GlcNAc...) asparagine glycosylation sites follow: Asn80, Asn104, Asn116, and Asn145. A disulfide bridge links Cys204 with Cys264. A lipid anchor (GPI-anchor amidated glycine) is attached at Gly305. A propeptide spans 306-329 (removed in mature form); the sequence is FSSLYSFSDVLHHLIMMLGICAVL.

In terms of assembly, may form homomeric filament after self-association or heteromeric filament after association with alpha-tectorin. Interacts with CEACAM16. In terms of processing, the presence of a hydrophobic C-terminus preceded by a potential cleavage site strongly suggests that tectorins are synthesized as glycosylphosphatidylinositol-linked, membrane-bound precursors. Tectorins are targeted to the apical surface of the inner ear epithelia by the lipid and proteolytically released into the extracellular compartment.

The protein resides in the cell membrane. It is found in the secreted. It localises to the extracellular space. Its subcellular location is the extracellular matrix. In terms of biological role, one of the major non-collagenous components of the tectorial membrane. The tectorial membrane is an extracellular matrix of the inner ear that covers the neuroepithelium of the cochlea and contacts the stereocilia bundles of specialized sensory hair cells. Sound induces movement of these hair cells relative to the tectorial membrane, deflects the stereocilia and leads to fluctuations in hair-cell membrane potential, transducing sound into electrical signals. The sequence is that of Beta-tectorin (TECTB) from Homo sapiens (Human).